Reading from the N-terminus, the 1522-residue chain is MTWAGDVEEQDDYFSCSDVSTSGDRRKRAPQTVTQEEVDQATSKIANEGQLSIRDILASQDTAVRITNPRDYQMELFLRAKMQNTIAVLDTGTGKTHIATLLLRHVLEEELENRAKGCAHKMAFFLVDSVNLVFQQANVLRCGLDQGVEGISGAMGQSLFQKQTWDKLFAVNMVIVCTAQVLVDCMMHSFMSISRMNLLIFDEAHHAKSNHPYARVMKDYYAHELDTSKRPRIFAMTASPVDVKGQSAEHVREAARELETLLHSRIATTSDSALARNSITRPEEEVAVYTRLRNEFETPLHQKVKAKYGDVAPFRKLFITAKLHASELGRWASDMYWSFAFADEQSRKLQIREELKYNRSKRDWSAAELDAQMARLKEATAFVQQYEIGAPTLSEQDLSSKVMKLQYWLNLYYERTTLARCIVFVEKRHTAQLLKLIFDHIGGPNLHCDVLVGINNRAGEENVSLRSQILTLQKFRRGELNCLFATSVAEEGLDIPQCNLVVRFDLYRTMIGYVQSRGRARHRNSKYLHMLEAENKEHTERLMNARHDENIMREFCKDLTHDRQLGDVEQEKAELIALEDKLFPSYTDEKSGAKLTYRSSLSILSHFVATYPSPDHNTMAQPTYVVNPKISDDPRDPQRNGFVCEVILPEHCPIISMVGQVYSRKTIAKCSAAFKMCIELRRKDHLNEFLLPTISKYLPAMRNALLAVSEKKKGNYAMVIKPTFWKQDRDTVPESLHLTIIDADRGLDRPHQPLAMLTRRPFPQLPSFPIYLTDCRPSNIVSQSLHIPISLTPELLEMFTRFTLRIFEDIYNKVYDYDVSKMSYWMLPVIEHRVASVRSMSNPQEVLDMDQIRKVYNEPFWKWSPQSRTDDLIDRYFVDPMNGGRRYYSDRLAPHLKPQDPVPANVPRQNHKFMKNILDFSDSKWMKSRDITRWHQDQPVLQVEKIPFRRNHLANVEDKEKKELANLETYICPEPLHISNLATPFVVMCYVLPAIIHRFESYLIALDACDVLDLKVSPALALEALTKDSDNSEEHGEEKINFKSGMGPNYERLEFLGDCFLKVATSLSVFVQQPEENEFEFHVRRMLMLCNQNLMETAVGKKKLYKYVRTDAFSRRNWYPEGLKLLRGKGLKKTEEDWLNVTHNLGDKSVADVCEAFIGAAFMQHHKGGQWTPNDWDEAVKAVKLFANSDDHLMEKWTDYYAAYTKPKYQTAGATATQLDLAHKIEMKHPYRFRYPRLLRSAFIHPSQPFMWENIPSYQRLEFLGDSLLDMAFIMHLFYKYPDKDPQWLTEHKTPMVSNKFLGAVCVKLGWHTHMKQNTAILSSQIRDYVYEVEEAEREANGAVDYWVSVSEPPKCLADVIEAFVAAIFVDSEFDFNVVQKFFDLHLKPFFLDMTLDAYENFASNHPTTRLSRLLSINFGCSEWRMGALETETLIPGKGKAIAAMVMIHDKVHFHSLGQSGRYARVRASHAALEKLEGLPPYEFRSKYGCDCVDEGEGEAGVDEAAVSKKVELMREAIGPSI.

The span at 1–12 shows a compositional bias: acidic residues; it reads MTWAGDVEEQDD. Positions 1–37 are disordered; it reads MTWAGDVEEQDDYFSCSDVSTSGDRRKRAPQTVTQEE. The region spanning 76 to 258 is the Helicase ATP-binding domain; sequence LFLRAKMQNT…EHVREAAREL (183 aa). 89–96 provides a ligand contact to ATP; sequence LDTGTGKT. Positions 202-205 match the DEAH box motif; it reads DEAH. A Helicase C-terminal domain is found at 408–576; it reads WLNLYYERTT…DVEQEKAELI (169 aa). Positions 600–700 constitute a Dicer dsRNA-binding fold domain; it reads SLSILSHFVA…LPTISKYLPA (101 aa). Residues 859–980 form the PAZ domain; that stretch reads PFWKWSPQSR…ICPEPLHISN (122 aa). 2 RNase III domains span residues 995–1166 and 1222–1373; these read IIHR…MQHH and AHKI…VDSE. Positions 1262, 1359, and 1362 each coordinate Mg(2+). In terms of domain architecture, DRBM spans 1409 to 1478; the sequence is TRLSRLLSIN…SHAALEKLEG (70 aa). The Zn(2+) site is built by C1421, H1449, C1490, and C1492.

It belongs to the helicase family. Dicer subfamily. Requires Mg(2+) as cofactor. Mn(2+) serves as cofactor.

In terms of biological role, dicer-like endonuclease involved in cleaving double-stranded RNA in the RNA interference (RNAi) pathway. Produces 21 to 25 bp dsRNAs (siRNAs) which target the selective destruction of homologous RNAs leading to sequence-specific suppression of gene expression, called post-transcriptional gene silencing (PTGS). Part of a broad host defense response against viral infection and transposons. The sequence is that of Dicer-like protein 1 (DCL1) from Phaeosphaeria nodorum (strain SN15 / ATCC MYA-4574 / FGSC 10173) (Glume blotch fungus).